Reading from the N-terminus, the 378-residue chain is Erythronate-4-phosphate dehydrogenase (378 aa).

Substrate-binding residues include S45 and T66. Residues D146 and T175 each coordinate NAD(+). Residue R208 is part of the active site. Residue D232 coordinates NAD(+). E237 is an active-site residue. The active-site Proton donor is the H254. G257 is an NAD(+) binding site. Y258 provides a ligand contact to substrate.

The protein belongs to the D-isomer specific 2-hydroxyacid dehydrogenase family. PdxB subfamily. Homodimer.

The protein localises to the cytoplasm. It carries out the reaction 4-phospho-D-erythronate + NAD(+) = (R)-3-hydroxy-2-oxo-4-phosphooxybutanoate + NADH + H(+). The protein operates within cofactor biosynthesis; pyridoxine 5'-phosphate biosynthesis; pyridoxine 5'-phosphate from D-erythrose 4-phosphate: step 2/5. Its function is as follows. Catalyzes the oxidation of erythronate-4-phosphate to 3-hydroxy-2-oxo-4-phosphonooxybutanoate. The protein is Erythronate-4-phosphate dehydrogenase of Escherichia coli O6:K15:H31 (strain 536 / UPEC).